We begin with the raw amino-acid sequence, 154 residues long: L-alanine exporter AlaE (154 aa).

The next 4 membrane-spanning stretches (helical) occupy residues 21-41 (FAMV…LSGM), 51-71 (LVAI…RDFF), 90-110 (ILAY…VIGA), and 115-135 (IVAA…VYGY).

It belongs to the AlaE exporter family.

It localises to the cell inner membrane. Its function is as follows. Exports L-alanine. In Escherichia fergusonii (strain ATCC 35469 / DSM 13698 / CCUG 18766 / IAM 14443 / JCM 21226 / LMG 7866 / NBRC 102419 / NCTC 12128 / CDC 0568-73), this protein is L-alanine exporter AlaE.